Consider the following 337-residue polypeptide: DNA-directed RNA polymerase subunit alpha (337 aa).

Residues 1–231 are alpha N-terminal domain (alpha-NTD); sequence MRNITTSAYT…KQLSVFDKIT (231 aa). An alpha C-terminal domain (alpha-CTD) region spans residues 248-337; that stretch reads NTKLLQNITD…IAELKAQNEG (90 aa).

The protein belongs to the RNA polymerase alpha chain family. In terms of assembly, homodimer. The RNAP catalytic core consists of 2 alpha, 1 beta, 1 beta' and 1 omega subunit. When a sigma factor is associated with the core the holoenzyme is formed, which can initiate transcription.

It catalyses the reaction RNA(n) + a ribonucleoside 5'-triphosphate = RNA(n+1) + diphosphate. Functionally, DNA-dependent RNA polymerase catalyzes the transcription of DNA into RNA using the four ribonucleoside triphosphates as substrates. In Campylobacter jejuni subsp. jejuni serotype O:6 (strain 81116 / NCTC 11828), this protein is DNA-directed RNA polymerase subunit alpha.